We begin with the raw amino-acid sequence, 543 residues long: CTP synthase (543 aa).

The interval 1-267 (MKQTKYIFVT…LNPIAEILDL (267 aa)) is amidoligase domain. Ser-15 provides a ligand contact to CTP. Ser-15 provides a ligand contact to UTP. ATP-binding positions include 16 to 21 (SLGKGI) and Asp-73. Asp-73 and Glu-141 together coordinate Mg(2+). CTP is bound by residues 148–150 (DIE), 188–193 (KTKPTQ), and Lys-224. UTP contacts are provided by residues 188–193 (KTKPTQ) and Lys-224. A Glutamine amidotransferase type-1 domain is found at 292–543 (KIAFVGKYVD…IKAAINYEDN (252 aa)). Residue Gly-354 participates in L-glutamine binding. The Nucleophile; for glutamine hydrolysis role is filled by Cys-381. L-glutamine is bound by residues 382 to 385 (LGMQ), Glu-405, and Arg-473. Residues His-516 and Glu-518 contribute to the active site.

Belongs to the CTP synthase family. In terms of assembly, homotetramer.

It carries out the reaction UTP + L-glutamine + ATP + H2O = CTP + L-glutamate + ADP + phosphate + 2 H(+). The enzyme catalyses L-glutamine + H2O = L-glutamate + NH4(+). It catalyses the reaction UTP + NH4(+) + ATP = CTP + ADP + phosphate + 2 H(+). Its pathway is pyrimidine metabolism; CTP biosynthesis via de novo pathway; CTP from UDP: step 2/2. Its activity is regulated as follows. Allosterically activated by GTP, when glutamine is the substrate; GTP has no effect on the reaction when ammonia is the substrate. The allosteric effector GTP functions by stabilizing the protein conformation that binds the tetrahedral intermediate(s) formed during glutamine hydrolysis. Inhibited by the product CTP, via allosteric rather than competitive inhibition. Functionally, catalyzes the ATP-dependent amination of UTP to CTP with either L-glutamine or ammonia as the source of nitrogen. Regulates intracellular CTP levels through interactions with the four ribonucleotide triphosphates. The polypeptide is CTP synthase (Campylobacter jejuni subsp. doylei (strain ATCC BAA-1458 / RM4099 / 269.97)).